Reading from the N-terminus, the 334-residue chain is Probable tRNA pseudouridine synthase B (334 aa).

Residue aspartate 82 is the Nucleophile of the active site. The region spanning 250-325 (LPKIWIKDSA…IAVDVEKVFM (76 aa)) is the PUA domain.

The protein belongs to the pseudouridine synthase TruB family. Type 2 subfamily.

The enzyme catalyses uridine(55) in tRNA = pseudouridine(55) in tRNA. In terms of biological role, could be responsible for synthesis of pseudouridine from uracil-55 in the psi GC loop of transfer RNAs. The sequence is that of Probable tRNA pseudouridine synthase B from Pyrococcus abyssi (strain GE5 / Orsay).